The sequence spans 78 residues: Acyl carrier protein (78 aa).

The 76-residue stretch at 1 to 76 (MALFEDIQAV…DVVKYIEDNK (76 aa)) folds into the Carrier domain. Serine 36 is subject to O-(pantetheine 4'-phosphoryl)serine.

This sequence belongs to the acyl carrier protein (ACP) family. Post-translationally, 4'-phosphopantetheine is transferred from CoA to a specific serine of apo-ACP by AcpS. This modification is essential for activity because fatty acids are bound in thioester linkage to the sulfhydryl of the prosthetic group.

It localises to the cytoplasm. Its pathway is lipid metabolism; fatty acid biosynthesis. In terms of biological role, carrier of the growing fatty acid chain in fatty acid biosynthesis. This chain is Acyl carrier protein, found in Helicobacter pylori (strain G27).